The following is a 93-amino-acid chain: Beta-defensin 128 (93 aa).

The first 18 residues, Met1–Gly18, serve as a signal peptide directing secretion. Intrachain disulfides connect Cys24–Cys52, Cys32–Cys46, and Cys36–Cys53.

Belongs to the beta-defensin family.

It is found in the secreted. In terms of biological role, has antibacterial activity. This is Beta-defensin 128 (DEFB128) from Homo sapiens (Human).